A 153-amino-acid polypeptide reads, in one-letter code: SsrA-binding protein (153 aa).

This sequence belongs to the SmpB family.

The protein localises to the cytoplasm. In terms of biological role, required for rescue of stalled ribosomes mediated by trans-translation. Binds to transfer-messenger RNA (tmRNA), required for stable association of tmRNA with ribosomes. tmRNA and SmpB together mimic tRNA shape, replacing the anticodon stem-loop with SmpB. tmRNA is encoded by the ssrA gene; the 2 termini fold to resemble tRNA(Ala) and it encodes a 'tag peptide', a short internal open reading frame. During trans-translation Ala-aminoacylated tmRNA acts like a tRNA, entering the A-site of stalled ribosomes, displacing the stalled mRNA. The ribosome then switches to translate the ORF on the tmRNA; the nascent peptide is terminated with the 'tag peptide' encoded by the tmRNA and targeted for degradation. The ribosome is freed to recommence translation, which seems to be the essential function of trans-translation. The polypeptide is SsrA-binding protein (Cytophaga hutchinsonii (strain ATCC 33406 / DSM 1761 / CIP 103989 / NBRC 15051 / NCIMB 9469 / D465)).